Here is a 258-residue protein sequence, read N- to C-terminus: Casein kinase II subunit beta' (258 aa).

Over residues 1-10 (MGSRSENVGT) the composition is skewed to polar residues. The segment at 1–29 (MGSRSENVGTVTREGSRVEQDDVLMDDDS) is disordered.

It belongs to the casein kinase 2 subunit beta family. As to quaternary structure, tetramer composed of an alpha subunit, an alpha' subunit, one beta subunit and one beta' subunit. Interacts with FACT subunits POB3 and SPT16. Interaction with YTA7. In terms of processing, phosphorylated by alpha subunit. The N-terminus is blocked.

Functionally, regulatory subunit of casein kinase II/CK2. As part of the kinase complex regulates the basal catalytic activity of the alpha subunit a constitutively active serine/threonine-protein kinase that phosphorylates a large number of substrates containing acidic residues C-terminal to the phosphorylated serine or threonine. In Saccharomyces cerevisiae (strain ATCC 204508 / S288c) (Baker's yeast), this protein is Casein kinase II subunit beta'.